We begin with the raw amino-acid sequence, 290 residues long: Endoplasmic reticulum-Golgi intermediate compartment protein 1 (290 aa).

At 1–27 (MSFDVRRFDIYRKVPKDLTQPTYTGAF) the chain is on the cytoplasmic side. A helical membrane pass occupies residues 28-48 (ISICCCVFMLFLFLSELTGFI). Residues 49 to 254 (ATEIVNELYV…RRRPFYRFIT (206 aa)) are Lumenal-facing. An N-linked (GlcNAc...) asparagine glycan is attached at Asn-74. The helical transmembrane segment at 255-275 (TICAIIGGTFTVAGIIDSCIF) threads the bilayer. Over 276–290 (TASEAWKKIQIGKMS) the chain is Cytoplasmic.

Belongs to the ERGIC family.

The protein resides in the endoplasmic reticulum membrane. It is found in the endoplasmic reticulum-Golgi intermediate compartment membrane. It localises to the golgi apparatus membrane. In terms of biological role, possible role in transport between endoplasmic reticulum and Golgi. In Danio rerio (Zebrafish), this protein is Endoplasmic reticulum-Golgi intermediate compartment protein 1 (ergic1).